The sequence spans 980 residues: Glutamate receptor ionotropic, kainate 5 (980 aa).

The signal sequence occupies residues 1 to 14; sequence MPAELLLLLIVAFA. Over 15–544 the chain is Extracellular; it reads SPSCQVLSSL…YFSFLDPFSP (530 aa). Intrachain disulfides connect Cys-36–Cys-292, Cys-83–Cys-334, and Cys-165–Cys-170. 10 N-linked (GlcNAc...) asparagine glycosylation sites follow: Asn-219, Asn-271, Asn-285, Asn-322, Asn-372, Asn-394, Asn-400, Asn-407, Asn-414, and Asn-478. A helical transmembrane segment spans residues 545 to 565; that stretch reads AVWLFMLLAYLAVSCVLFLAA. The Cytoplasmic segment spans residues 566 to 622; it reads RLSPYEWYNPHPCLRARPHILENQYTLGNSLWFPVGGFMQQGSEIMPRALSTRCVSG. Residues 623 to 643 traverse the membrane as a helical segment; that stretch reads VWWAFTLIIISSYTANLAAFL. Topologically, residues 644-803 are extracellular; that stretch reads TVQRMEVPVE…HRAKGLGMEN (160 aa). The N-linked (GlcNAc...) asparagine glycan is linked to Asn-735. A helical membrane pass occupies residues 804–824; the sequence is IGGIFIVLICGLIIAVFVAVM. Residues 825–980 are Cytoplasmic-facing; it reads EFIWSTRRSA…AGPRELAEHE (156 aa). Disordered regions lie at residues 891–927 and 944–980; these read YSAG…PTPC and ASGA…AEHE. Over residues 894–903 the composition is skewed to gly residues; it reads GAGGDAGSAH.

Belongs to the glutamate-gated ion channel (TC 1.A.10.1) family. GRIK5 subfamily. As to quaternary structure, homotetramer. Heterotetramer with GRIK2. Can form functional heteromeric receptors with GRIK1 and GRIK2. Can form functional heteromeric receptors with GRIK3.

The protein localises to the cell membrane. It is found in the postsynaptic cell membrane. It localises to the presynaptic cell membrane. In terms of biological role, ionotropic glutamate receptor that functions as a cation-permeable ligand-gated ion channel, gated by L-glutamate and the glutamatergic agonist kainic acid. Cannot form functional channels on its own and produces channel activity only in heteromeric assembly with GRIK1 and GRIK2 subunits. Can form functional heteromeric receptors with GRIK3. The protein is Glutamate receptor ionotropic, kainate 5 (GRIK5) of Homo sapiens (Human).